Consider the following 304-residue polypeptide: Quinolinate synthase (304 aa).

2 residues coordinate iminosuccinate: His-23 and Ser-40. Cys-85 contributes to the [4Fe-4S] cluster binding site. Residues 111–113 and Ser-128 contribute to the iminosuccinate site; that span reads YIN. Residue Cys-171 participates in [4Fe-4S] cluster binding. Iminosuccinate-binding positions include 197–199 and Thr-214; that span reads HPE. Cys-259 contacts [4Fe-4S] cluster.

This sequence belongs to the quinolinate synthase family. Type 2 subfamily. It depends on [4Fe-4S] cluster as a cofactor.

Its subcellular location is the cytoplasm. The catalysed reaction is iminosuccinate + dihydroxyacetone phosphate = quinolinate + phosphate + 2 H2O + H(+). It participates in cofactor biosynthesis; NAD(+) biosynthesis; quinolinate from iminoaspartate: step 1/1. Catalyzes the condensation of iminoaspartate with dihydroxyacetone phosphate to form quinolinate. This chain is Quinolinate synthase, found in Clostridioides difficile (strain 630) (Peptoclostridium difficile).